A 254-amino-acid polypeptide reads, in one-letter code: 3-deoxy-manno-octulosonate cytidylyltransferase (254 aa).

Belongs to the KdsB family.

It is found in the cytoplasm. The enzyme catalyses 3-deoxy-alpha-D-manno-oct-2-ulosonate + CTP = CMP-3-deoxy-beta-D-manno-octulosonate + diphosphate. It participates in nucleotide-sugar biosynthesis; CMP-3-deoxy-D-manno-octulosonate biosynthesis; CMP-3-deoxy-D-manno-octulosonate from 3-deoxy-D-manno-octulosonate and CTP: step 1/1. The protein operates within bacterial outer membrane biogenesis; lipopolysaccharide biosynthesis. In terms of biological role, activates KDO (a required 8-carbon sugar) for incorporation into bacterial lipopolysaccharide in Gram-negative bacteria. The chain is 3-deoxy-manno-octulosonate cytidylyltransferase from Haemophilus influenzae (strain PittEE).